We begin with the raw amino-acid sequence, 363 residues long: Aminomethyltransferase (363 aa).

Belongs to the GcvT family. The glycine cleavage system is composed of four proteins: P, T, L and H.

It carries out the reaction N(6)-[(R)-S(8)-aminomethyldihydrolipoyl]-L-lysyl-[protein] + (6S)-5,6,7,8-tetrahydrofolate = N(6)-[(R)-dihydrolipoyl]-L-lysyl-[protein] + (6R)-5,10-methylene-5,6,7,8-tetrahydrofolate + NH4(+). The glycine cleavage system catalyzes the degradation of glycine. This is Aminomethyltransferase from Picosynechococcus sp. (strain ATCC 27264 / PCC 7002 / PR-6) (Agmenellum quadruplicatum).